The chain runs to 280 residues: Large ribosomal subunit protein uL2 (280 aa).

Disordered stretches follow at residues 1–59 (MAIR…GGHK) and 223–280 (GVVM…NKKR). A compositionally biased stretch (basic and acidic residues) spans 23 to 33 (ELTRSTPEKSL). Composition is skewed to basic residues over residues 36–59 (PLHK…GGHK) and 269–280 (VRRRRSNKNKKR).

It belongs to the universal ribosomal protein uL2 family. As to quaternary structure, part of the 50S ribosomal subunit. Forms a bridge to the 30S subunit in the 70S ribosome.

Its function is as follows. One of the primary rRNA binding proteins. Required for association of the 30S and 50S subunits to form the 70S ribosome, for tRNA binding and peptide bond formation. It has been suggested to have peptidyltransferase activity; this is somewhat controversial. Makes several contacts with the 16S rRNA in the 70S ribosome. This chain is Large ribosomal subunit protein uL2, found in Corynebacterium kroppenstedtii (strain DSM 44385 / JCM 11950 / CIP 105744 / CCUG 35717).